We begin with the raw amino-acid sequence, 98 residues long: Acylphosphatase (98 aa).

The Acylphosphatase-like domain occupies Ala-10–Pro-96. Active-site residues include Arg-25 and Asn-43.

It belongs to the acylphosphatase family.

It catalyses the reaction an acyl phosphate + H2O = a carboxylate + phosphate + H(+). The protein is Acylphosphatase (acyP) of Azoarcus sp. (strain BH72).